Reading from the N-terminus, the 25-residue chain is U1-poneritoxin-Ng1b (25 aa).

As to expression, expressed by the venom gland.

It localises to the secreted. The protein localises to the target cell membrane. Its function is as follows. Has a broad spectrum of activity against both Gram-positive and Gram-negative bacteria and S.cerevisiae. Has insecticidal and hemolytic activities. May act by disrupting the integrity of the bacterial cell membrane. The sequence is that of U1-poneritoxin-Ng1b from Neoponera goeldii (Ponerine ant).